The following is a 2415-amino-acid chain: Spectrin alpha chain (2415 aa).

Spectrin repeat units lie at residues 48 to 150, 154 to 254, 258 to 362, 366 to 464, 471 to 574, 577 to 679, 683 to 784, 788 to 890, and 894 to 963; these read RFQY…KLQQ, LVQF…QEKL, HEIQ…KLDE, LHRF…DRRI, DLQL…LLED, RYQQ…KLNE, QQQF…QHLL, QVQQ…QDLD, and QAHQ…RQQE. An SH3 domain is found at 970–1029; it reads TGKECVVALYDYTEKSPREVSMKKGDVLTLLNSNNKDWWKVEVNDRQGFVPAAYIKKIDA. Ser1032 and Ser1034 each carry phosphoserine. 11 Spectrin repeats span residues 1079–1177, 1181–1284, 1287–1391, 1394–1496, 1500–1604, 1608–1710, 1714–1816, 1820–1921, 1926–2028, 2040–2141, and 2154–2252; these read VREA…ASQL, HEVQ…EKLL, YDLQ…QLEQ, DLQL…SRLG, TLQQ…KLKE, QRTY…RLNE, LHQF…KLDE, YQQF…GALL, YLQF…DRLL, LYLT…DGEL, and LRKE…NLEQ. 2 consecutive EF-hand domains span residues 2265 to 2300 and 2308 to 2343; these read DSLK…LGYD and QPDP…KETE. Positions 2278, 2280, 2282, 2284, 2289, 2321, 2323, 2325, 2327, and 2332 each coordinate Ca(2+).

This sequence belongs to the spectrin family. As to quaternary structure, native spectrin molecule is a tetramer composed of two antiparallel heterodimers joined head to head so that each end of the native molecule includes the C-terminus of the alpha subunit and the N-terminus of the beta subunit. Interacts with calmodulin in a calcium-dependent manner, interacts with F-actin and also interacts with Lva. Interacts with Ten-m. In terms of tissue distribution, a substantial pool of maternal protein in the egg undergoes dynamic changes in distribution early in embryogenesis. In gastrulated embryo, the highest level of protein is found in the respiratory tract cells and the lowest in parts of the forming gut.

The protein localises to the cytoplasm. It is found in the cytoskeleton. It localises to the golgi apparatus. The protein resides in the cell projection. Its subcellular location is the cilium. The protein localises to the flagellum. Functionally, spectrin is the major constituent of the cytoskeletal network underlying the erythrocyte plasma membrane. It associates with band 4.1 and actin to form the cytoskeletal superstructure of the erythrocyte plasma membrane. Essential for larval survival and development. Stabilizes cell to cell interactions that are critical for the maintenance of cell shape and subcellular organization within embryonic tissues. Lva and spectrin may form a Golgi-based scaffold that mediates interaction of Golgi bodies with microtubules and facilitates Golgi-derived membrane secretion required for the formation of furrows during cellularization. This Drosophila melanogaster (Fruit fly) protein is Spectrin alpha chain (alpha-Spec).